The sequence spans 49 residues: Osteocalcin (49 aa).

Residues 1 to 47 form the Gla domain; sequence YLDHGLGAPAPYPDPLEPKREVCELNPDCDELADHIGFQEAYRRFYG. Proline 9 carries the post-translational modification Hydroxyproline. Residues glutamate 17, glutamate 21, glutamate 24, and aspartate 30 each contribute to the Ca(2+) site. Residues glutamate 17, glutamate 21, and glutamate 24 each carry the 4-carboxyglutamate modification. The cysteines at positions 23 and 29 are disulfide-linked.

The protein belongs to the osteocalcin/matrix Gla protein family. Post-translationally, gamma-carboxyglutamic acid residues are formed by vitamin K dependent carboxylation. These residues are essential for the binding of calcium.

The protein resides in the secreted. Functionally, the carboxylated form is one of the main organic components of the bone matrix, which constitutes 1-2% of the total bone protein: it acts as a negative regulator of bone formation and is required to limit bone formation without impairing bone resorption or mineralization. The carboxylated form binds strongly to apatite and calcium. The uncarboxylated form acts as a hormone secreted by osteoblasts, which regulates different cellular processes, such as energy metabolism, male fertility and brain development. Regulates of energy metabolism by acting as a hormone favoring pancreatic beta-cell proliferation, insulin secretion and sensitivity and energy expenditure. Uncarboxylated osteocalcin hormone also promotes testosterone production in the testes: acts as a ligand for G protein-coupled receptor GPRC6A at the surface of Leydig cells, initiating a signaling response that promotes the expression of enzymes required for testosterone synthesis in a CREB-dependent manner. Also acts as a regulator of brain development: osteocalcin hormone crosses the blood-brain barrier and acts as a ligand for GPR158 on neurons, initiating a signaling response that prevents neuronal apoptosis in the hippocampus, favors the synthesis of all monoamine neurotransmitters and inhibits that of gamma-aminobutyric acid (GABA). Osteocalcin also crosses the placenta during pregnancy and maternal osteocalcin is required for fetal brain development. This chain is Osteocalcin (BGLAP), found in Bison priscus (Steppe wisent).